A 178-amino-acid chain; its full sequence is Large ribosomal subunit protein uL6 (178 aa).

It belongs to the universal ribosomal protein uL6 family. In terms of assembly, part of the 50S ribosomal subunit.

Functionally, this protein binds to the 23S rRNA, and is important in its secondary structure. It is located near the subunit interface in the base of the L7/L12 stalk, and near the tRNA binding site of the peptidyltransferase center. In Coxiella burnetii (strain CbuK_Q154) (Coxiella burnetii (strain Q154)), this protein is Large ribosomal subunit protein uL6.